The following is an 86-amino-acid chain: Translation initiation factor IF-1 3 (86 aa).

The region spanning 1 to 72 (MAKEELIEMQ…NKGRVTFRHI (72 aa)) is the S1-like domain.

This sequence belongs to the IF-1 family. Component of the 30S ribosomal translation pre-initiation complex which assembles on the 30S ribosome in the order IF-2 and IF-3, IF-1 and N-formylmethionyl-tRNA(fMet); mRNA recruitment can occur at any time during PIC assembly.

The protein resides in the cytoplasm. Functionally, one of the essential components for the initiation of protein synthesis. Stabilizes the binding of IF-2 and IF-3 on the 30S subunit to which N-formylmethionyl-tRNA(fMet) subsequently binds. Helps modulate mRNA selection, yielding the 30S pre-initiation complex (PIC). Upon addition of the 50S ribosomal subunit IF-1, IF-2 and IF-3 are released leaving the mature 70S translation initiation complex. The chain is Translation initiation factor IF-1 3 from Acidovorax sp. (strain JS42).